A 283-amino-acid chain; its full sequence is 4-hydroxybenzoate octaprenyltransferase (283 aa).

The next 9 helical transmembrane spans lie at 16 to 36, 40 to 60, 85 to 105, 108 to 128, 135 to 155, 160 to 180, 204 to 224, 226 to 246, and 263 to 283; these read PIGT…AGAG, LRIV…GCVI, ISAT…FGLV, LNTE…LYPF, LPQI…FTAL, WFIA…YDTE, FDRL…GWIL, LITV…LFAY, and FLHN…HYWF.

Belongs to the UbiA prenyltransferase family. It depends on Mg(2+) as a cofactor.

It localises to the cell inner membrane. It carries out the reaction all-trans-octaprenyl diphosphate + 4-hydroxybenzoate = 4-hydroxy-3-(all-trans-octaprenyl)benzoate + diphosphate. It participates in cofactor biosynthesis; ubiquinone biosynthesis. Functionally, catalyzes the prenylation of para-hydroxybenzoate (PHB) with an all-trans polyprenyl group. Mediates the second step in the final reaction sequence of ubiquinone-8 (UQ-8) biosynthesis, which is the condensation of the polyisoprenoid side chain with PHB, generating the first membrane-bound Q intermediate 3-octaprenyl-4-hydroxybenzoate. The chain is 4-hydroxybenzoate octaprenyltransferase from Idiomarina loihiensis (strain ATCC BAA-735 / DSM 15497 / L2-TR).